Reading from the N-terminus, the 196-residue chain is Nucleoid occlusion factor SlmA (196 aa).

The HTH tetR-type domain maps to 7–68; sequence TNRREEILQA…GLIEFIEDSI (62 aa). Residues 31–50 constitute a DNA-binding region (H-T-H motif); it reads TTAKLAAQVGVSEAALYRHF. Positions 115–142 form a coiled coil; sequence EQDRLQSRINQLFERIETQLRQVLRERK.

Belongs to the nucleoid occlusion factor SlmA family. As to quaternary structure, homodimer. Interacts with FtsZ.

It localises to the cytoplasm. Its subcellular location is the nucleoid. Its function is as follows. Required for nucleoid occlusion (NO) phenomenon, which prevents Z-ring formation and cell division over the nucleoid. Acts as a DNA-associated cell division inhibitor that binds simultaneously chromosomal DNA and FtsZ, and disrupts the assembly of FtsZ polymers. SlmA-DNA-binding sequences (SBS) are dispersed on non-Ter regions of the chromosome, preventing FtsZ polymerization at these regions. The polypeptide is Nucleoid occlusion factor SlmA (Photobacterium profundum (strain SS9)).